We begin with the raw amino-acid sequence, 569 residues long: Nucleoprotein (569 aa).

The interval 54 to 241 is binding site for the cap structure m7GTP; that stretch reads MRKERRDDND…IDTKKSSLNI (188 aa). Residues Asp-389 and Glu-391 each contribute to the Mn(2+) site. Residues Glu-399, Cys-506, His-509, and Cys-529 each coordinate Zn(2+). Position 533 (Asp-533) interacts with Mn(2+).

Belongs to the arenaviridae nucleocapsid protein family. Homomultimerizes to form the nucleocapsid. Binds to viral genomic RNA. Interacts with glycoprotein G2. Interacts with protein Z; this interaction probably directs the encapsidated genome to budding sites. Interacts with protein L; this interaction does not interfere with Z-L interaction. Interacts with host IKBKE (via Protein kinase domain); the interaction inhibits IKBKE kinase activity.

It localises to the virion. Its subcellular location is the host cytoplasm. Its function is as follows. Encapsidates the genome, protecting it from nucleases. The encapsidated genomic RNA is termed the nucleocapsid (NC). Serves as template for viral transcription and replication. The increased presence of protein N in host cell does not seem to trigger the switch from transcription to replication as observed in other negative strain RNA viruses. Through the interaction with host IKBKE, strongly inhibits the phosphorylation and nuclear translocation of host IRF3, a protein involved in interferon activation pathway, leading to the inhibition of interferon-beta and IRF3-dependent promoters activation. Also encodes a functional 3'-5' exoribonuclease that degrades preferentially dsRNA substrates and thereby participates in the suppression of interferon induction. The protein is Nucleoprotein of Lassa virus (strain Mouse/Sierra Leone/Josiah/1976) (LASV).